A 371-amino-acid chain; its full sequence is Putative agmatine deiminase (371 aa).

Cys361 serves as the catalytic Amidino-cysteine intermediate.

This sequence belongs to the agmatine deiminase family.

The enzyme catalyses agmatine + H2O = N-carbamoylputrescine + NH4(+). The sequence is that of Putative agmatine deiminase from Selenomonas ruminantium.